The following is a 391-amino-acid chain: Mannonate dehydratase (391 aa).

The protein belongs to the mannonate dehydratase family. The cofactor is Fe(2+). Mn(2+) is required as a cofactor.

It carries out the reaction D-mannonate = 2-dehydro-3-deoxy-D-gluconate + H2O. Its pathway is carbohydrate metabolism; pentose and glucuronate interconversion. Functionally, catalyzes the dehydration of D-mannonate. In Marinomonas sp. (strain MWYL1), this protein is Mannonate dehydratase.